Consider the following 275-residue polypeptide: ATP synthase subunit delta (275 aa).

Belongs to the ATPase delta chain family. In terms of assembly, F-type ATPases have 2 components, F(1) - the catalytic core - and F(0) - the membrane proton channel. F(1) has five subunits: alpha(3), beta(3), gamma(1), delta(1), epsilon(1). F(0) has three main subunits: a(1), b(2) and c(10-14). The alpha and beta chains form an alternating ring which encloses part of the gamma chain. F(1) is attached to F(0) by a central stalk formed by the gamma and epsilon chains, while a peripheral stalk is formed by the delta and b chains.

The protein resides in the cell membrane. In terms of biological role, f(1)F(0) ATP synthase produces ATP from ADP in the presence of a proton or sodium gradient. F-type ATPases consist of two structural domains, F(1) containing the extramembraneous catalytic core and F(0) containing the membrane proton channel, linked together by a central stalk and a peripheral stalk. During catalysis, ATP synthesis in the catalytic domain of F(1) is coupled via a rotary mechanism of the central stalk subunits to proton translocation. Functionally, this protein is part of the stalk that links CF(0) to CF(1). It either transmits conformational changes from CF(0) to CF(1) or is implicated in proton conduction. The chain is ATP synthase subunit delta from Arthrobacter sp. (strain FB24).